The sequence spans 694 residues: Threonine--tRNA ligase (694 aa).

The region spanning 8-74 is the TGS domain; it reads NFVNTSVTTH…EETATFTAVP (67 aa). A catalytic region spans residues 273–579; sequence DHRRLGTELD…LLEHYAGAFP (307 aa). Zn(2+) is bound by residues C378, H429, and H556.

This sequence belongs to the class-II aminoacyl-tRNA synthetase family. In terms of assembly, homodimer. Zn(2+) is required as a cofactor.

The protein localises to the cytoplasm. The catalysed reaction is tRNA(Thr) + L-threonine + ATP = L-threonyl-tRNA(Thr) + AMP + diphosphate + H(+). In terms of biological role, catalyzes the attachment of threonine to tRNA(Thr) in a two-step reaction: L-threonine is first activated by ATP to form Thr-AMP and then transferred to the acceptor end of tRNA(Thr). Also edits incorrectly charged L-seryl-tRNA(Thr). This Corynebacterium efficiens (strain DSM 44549 / YS-314 / AJ 12310 / JCM 11189 / NBRC 100395) protein is Threonine--tRNA ligase.